Reading from the N-terminus, the 303-residue chain is Glycine--tRNA ligase alpha subunit (303 aa).

The protein belongs to the class-II aminoacyl-tRNA synthetase family. In terms of assembly, tetramer of two alpha and two beta subunits.

It localises to the cytoplasm. It carries out the reaction tRNA(Gly) + glycine + ATP = glycyl-tRNA(Gly) + AMP + diphosphate. This is Glycine--tRNA ligase alpha subunit from Enterobacter sp. (strain 638).